The sequence spans 460 residues: NADH-ubiquinone oxidoreductase chain 4 (460 aa).

Helical transmembrane passes span 22–42 (WLWS…LSWF), 59–79 (IDPL…LMIL), 94–113 (RIYI…AFSA), 117–139 (ILFY…RWGN), 148–168 (TYFL…LLFM), 195–215 (FWWT…GVHL), 231–251 (ILAA…IIML), 258–278 (MAYP…SICL), 286–306 (MIAY…LIQT), 310–330 (FAGA…LFCL), 343–362 (LLLA…WWLL), 394–414 (ILLT…MFLM), and 436–456 (LLLT…ELIW).

The protein belongs to the complex I subunit 4 family.

The protein localises to the mitochondrion membrane. The catalysed reaction is a ubiquinone + NADH + 5 H(+)(in) = a ubiquinol + NAD(+) + 4 H(+)(out). Its function is as follows. Core subunit of the mitochondrial membrane respiratory chain NADH dehydrogenase (Complex I) that is believed to belong to the minimal assembly required for catalysis. Complex I functions in the transfer of electrons from NADH to the respiratory chain. The immediate electron acceptor for the enzyme is believed to be ubiquinone. In Scyliorhinus canicula (Small-spotted catshark), this protein is NADH-ubiquinone oxidoreductase chain 4 (MTND4).